Here is a 431-residue protein sequence, read N- to C-terminus: Histidine--tRNA ligase (431 aa).

It belongs to the class-II aminoacyl-tRNA synthetase family. In terms of assembly, homodimer.

The protein resides in the cytoplasm. The enzyme catalyses tRNA(His) + L-histidine + ATP = L-histidyl-tRNA(His) + AMP + diphosphate + H(+). This Neisseria meningitidis serogroup B (strain ATCC BAA-335 / MC58) protein is Histidine--tRNA ligase.